A 266-amino-acid polypeptide reads, in one-letter code: Gap junction beta-4 protein (266 aa).

An intramembrane segment occupies 2-13 (NWAFLQGLLSGV). Residues 14–20 (NKYSTVL) are Cytoplasmic-facing. Residues 21 to 40 (SRIWLSVVFIFRVLVYVVAA) form a helical membrane-spanning segment. Topologically, residues 41-73 (EEVWDDEQKDFVCNTKQPGCPNVCYDEFFPVSH) are extracellular. 3 disulfide bridges follow: cysteine 53-cysteine 175, cysteine 60-cysteine 169, and cysteine 64-cysteine 164. The helical transmembrane segment at 74–94 (VRLWALQLILVTCPSLLVVMH) threads the bilayer. The Cytoplasmic portion of the chain corresponds to 95–130 (VAYREERERKHHLKHGPNAPSLYDNLSKKRGGLWWT). Residues 131-151 (YLLSLIFKAAVDAGFLYIFHR) traverse the membrane as a helical segment. Residues 152-184 (LYKDYDMPRVVACSVEPCPHTVDCYISRPTEKK) lie on the Extracellular side of the membrane. The helical transmembrane segment at 185 to 205 (VFTYFMVTTAAICILLNLSEV) threads the bilayer. At 206-266 (FYLVGKRCME…SAPVDAGGYP (61 aa)) the chain is on the cytoplasmic side.

This sequence belongs to the connexin family. Beta-type (group I) subfamily. In terms of assembly, a hemichannel or connexon is composed of a hexamer of connexins. A functional gap junction is formed by the apposition of two hemichannels. Forms heteromeric channels with GJB2.

It localises to the cell membrane. Its subcellular location is the cell junction. The protein resides in the gap junction. Its function is as follows. Structural component of gap junctions. Gap junctions are dodecameric channels that connect the cytoplasm of adjoining cells. They are formed by the docking of two hexameric hemichannels, one from each cell membrane. Small molecules and ions diffuse from one cell to a neighboring cell via the central pore. This chain is Gap junction beta-4 protein (GJB4), found in Homo sapiens (Human).